We begin with the raw amino-acid sequence, 247 residues long: Ribosomal RNA processing protein 36 homolog (247 aa).

4 disordered regions span residues 1-29 (MDNQ…HLKD), 62-89 (RTQG…QRVP), 136-188 (SVEK…RELV), and 218-247 (GKLQ…QVDQ). Positions 8 to 23 (SSDDESPTDDCSDEGE) are enriched in acidic residues. 2 stretches are compositionally biased toward basic and acidic residues: residues 136 to 153 (SVEK…RKNL) and 164 to 174 (ERSRKSAEAKR). A compositionally biased stretch (basic residues) spans 218–240 (GKLQKYLTKRRKKTASKDRRHVP).

This sequence belongs to the RRP36 family.

It localises to the nucleus. Its subcellular location is the nucleolus. Functionally, involved in the early processing steps of the pre-rRNA in the maturation pathway leading to the 18S rRNA. In Nematostella vectensis (Starlet sea anemone), this protein is Ribosomal RNA processing protein 36 homolog.